The sequence spans 148 residues: Large ribosomal subunit protein uL15 (148 aa).

The tract at residues 12-52 (ERKNRKRVGRGGGSGWGGTSGKGHKGQNARSGGGVPAWFEG) is disordered. The span at 21-32 (RGGGSGWGGTSG) shows a compositional bias: gly residues.

This sequence belongs to the universal ribosomal protein uL15 family. As to quaternary structure, part of the 50S ribosomal subunit.

In terms of biological role, binds to the 23S rRNA. The protein is Large ribosomal subunit protein uL15 of Maridesulfovibrio salexigens (strain ATCC 14822 / DSM 2638 / NCIMB 8403 / VKM B-1763) (Desulfovibrio salexigens).